A 601-amino-acid polypeptide reads, in one-letter code: Elongation factor 4 (601 aa).

Residues 5–187 (SNIRNFSIIA…AIVERLPAPE (183 aa)) enclose the tr-type G domain. Residues 17–22 (DHGKST) and 134–137 (NKID) contribute to the GTP site.

This sequence belongs to the TRAFAC class translation factor GTPase superfamily. Classic translation factor GTPase family. LepA subfamily.

Its subcellular location is the cell inner membrane. The catalysed reaction is GTP + H2O = GDP + phosphate + H(+). Functionally, required for accurate and efficient protein synthesis under certain stress conditions. May act as a fidelity factor of the translation reaction, by catalyzing a one-codon backward translocation of tRNAs on improperly translocated ribosomes. Back-translocation proceeds from a post-translocation (POST) complex to a pre-translocation (PRE) complex, thus giving elongation factor G a second chance to translocate the tRNAs correctly. Binds to ribosomes in a GTP-dependent manner. The polypeptide is Elongation factor 4 (Oleidesulfovibrio alaskensis (strain ATCC BAA-1058 / DSM 17464 / G20) (Desulfovibrio alaskensis)).